Here is a 256-residue protein sequence, read N- to C-terminus: 6-carboxyhexanoate--CoA ligase (256 aa).

Belongs to the BioW family. Homodimer. Requires Mg(2+) as cofactor.

The catalysed reaction is heptanedioate + ATP + CoA = 6-carboxyhexanoyl-CoA + AMP + diphosphate. It participates in metabolic intermediate metabolism; pimeloyl-CoA biosynthesis; pimeloyl-CoA from pimelate: step 1/1. In terms of biological role, catalyzes the transformation of pimelate into pimeloyl-CoA with concomitant hydrolysis of ATP to AMP. The polypeptide is 6-carboxyhexanoate--CoA ligase (Bacillus velezensis (strain DSM 23117 / BGSC 10A6 / LMG 26770 / FZB42) (Bacillus amyloliquefaciens subsp. plantarum)).